Reading from the N-terminus, the 195-residue chain is dTDP-4-dehydrorhamnose 3,5-epimerase (195 aa).

Residues arginine 31, glutamate 36, 54-56 (QDN), and arginine 67 contribute to the substrate site. Histidine 70 functions as the Proton acceptor in the catalytic mechanism. Substrate contacts are provided by lysine 80 and histidine 127. The active-site Proton donor is tyrosine 140. Substrate is bound by residues aspartate 151 and lysine 176.

It belongs to the dTDP-4-dehydrorhamnose 3,5-epimerase family. In terms of assembly, homodimer.

The catalysed reaction is dTDP-4-dehydro-6-deoxy-alpha-D-glucose = dTDP-4-dehydro-beta-L-rhamnose. It participates in carbohydrate biosynthesis; dTDP-L-rhamnose biosynthesis. Catalyzes the epimerization of the C3' and C5'positions of dTDP-6-deoxy-D-xylo-4-hexulose, forming dTDP-6-deoxy-L-lyxo-4-hexulose. In Sinorhizobium fredii (strain NBRC 101917 / NGR234), this protein is dTDP-4-dehydrorhamnose 3,5-epimerase.